The primary structure comprises 53 residues: Photosystem II reaction center protein K (53 aa).

Positions M1–A16 are excised as a propeptide. The chain crosses the membrane as a helical span at residues I28–A48.

Belongs to the PsbK family. In terms of assembly, PSII is composed of 1 copy each of membrane proteins PsbA, PsbB, PsbC, PsbD, PsbE, PsbF, PsbH, PsbI, PsbJ, PsbK, PsbL, PsbM, PsbT, PsbX, PsbY, PsbZ, Psb30/Ycf12, at least 3 peripheral proteins of the oxygen-evolving complex and a large number of cofactors. It forms dimeric complexes.

Its subcellular location is the plastid. It localises to the chloroplast thylakoid membrane. Functionally, one of the components of the core complex of photosystem II (PSII). PSII is a light-driven water:plastoquinone oxidoreductase that uses light energy to abstract electrons from H(2)O, generating O(2) and a proton gradient subsequently used for ATP formation. It consists of a core antenna complex that captures photons, and an electron transfer chain that converts photonic excitation into a charge separation. This chain is Photosystem II reaction center protein K, found in Huperzia lucidula (Shining clubmoss).